Reading from the N-terminus, the 361-residue chain is Peptide chain release factor 1 (361 aa).

Gln237 bears the N5-methylglutamine mark. Basic and acidic residues predominate over residues 287 to 297 (KQQKEQSDTRK). Residues 287 to 313 (KQQKEQSDTRKSLVGSGDRSERIRTYN) are disordered.

Belongs to the prokaryotic/mitochondrial release factor family. In terms of processing, methylated by PrmC. Methylation increases the termination efficiency of RF1.

The protein localises to the cytoplasm. Its function is as follows. Peptide chain release factor 1 directs the termination of translation in response to the peptide chain termination codons UAG and UAA. This chain is Peptide chain release factor 1, found in Francisella tularensis subsp. tularensis (strain FSC 198).